The sequence spans 380 residues: Cytochrome b (380 aa).

The next 4 helical transmembrane spans lie at Phe-33–Met-53, Trp-77–Ile-98, Trp-113–Leu-133, and Phe-178–Leu-198. Heme b contacts are provided by His-83 and His-97. Heme b contacts are provided by His-182 and His-196. A ubiquinone is bound at residue His-201. The next 4 membrane-spanning stretches (helical) occupy residues Tyr-226 to Ala-246, Leu-288 to His-308, Leu-320 to Gly-340, and Phe-347 to Pro-367.

This sequence belongs to the cytochrome b family. In terms of assembly, the cytochrome bc1 complex contains 3 respiratory subunits (MT-CYB, CYC1 and UQCRFS1), 2 core proteins (UQCRC1 and UQCRC2) and probably 6 low-molecular weight proteins. It depends on heme b as a cofactor.

It is found in the mitochondrion inner membrane. In terms of biological role, component of the ubiquinol-cytochrome c reductase complex (complex III or cytochrome b-c1 complex) that is part of the mitochondrial respiratory chain. The b-c1 complex mediates electron transfer from ubiquinol to cytochrome c. Contributes to the generation of a proton gradient across the mitochondrial membrane that is then used for ATP synthesis. This is Cytochrome b (mt-cyb) from Oncorhynchus keta (Chum salmon).